Consider the following 648-residue polypeptide: A-type voltage-gated potassium channel KCND1 (648 aa).

The Cytoplasmic segment spans residues Met1 to Thr183. The interval Ala2–Leu20 is interaction with KCNIP1, KCNIP2, and other family members. Residues Ala2–Leu20 form an interaction with KCNIP2 region. Residues His104, Cys131, and Cys132 each coordinate Zn(2+). The tract at residues Ala144–Ala164 is disordered. A helical transmembrane segment spans residues Ala184 to Val205. At Glu206 to Ala230 the chain is on the extracellular side. The chain crosses the membrane as a helical span at residues Phe231–Ala252. The Cytoplasmic segment spans residues Ala253–Val263. A helical membrane pass occupies residues Met264–Asn284. The Extracellular portion of the chain corresponds to Glu285–Val287. A helical; Voltage-sensor membrane pass occupies residues Ser288–His308. Residues Ser309–Ala323 are Cytoplasmic-facing. Residues Gln310 to Ala323 are S4-S5 linker. The chain crosses the membrane as a helical span at residues Ser324–Phe345. At Tyr346–Ile359 the chain is on the extracellular side. Residues Asn352 and Asn355 are each glycosylated (N-linked (GlcNAc...) asparagine). Residues Pro360–Thr371 constitute an intramembrane region (helical). The Selectivity filter signature appears at Thr372 to Asp377. An intramembrane segment occupies Thr372–Val379. Over Pro380–Lys386 the chain is Extracellular. Residues Ile387–Tyr415 form a helical membrane-spanning segment. The Cytoplasmic segment spans residues His416–Leu648. Ser458 is modified (phosphoserine). The segment at Phe474 to Thr489 is mediates dendritic targeting. The tract at residues Phe474–Thr489 is required for dendritic targeting. Residue Ser555 is modified to Phosphoserine. The interval Ile601 to Pro636 is disordered.

It belongs to the potassium channel family. D (Shal) (TC 1.A.1.2) subfamily. Kv4.1/KCND1 sub-subfamily. Component of heteromultimeric potassium channels. Identified in potassium channel complexes containing KCND1, KCND2, KCND3, KCNIP1, KCNIP2, KCNIP3, KCNIP4, DPP6 and DPP10.

Its subcellular location is the cell membrane. The catalysed reaction is K(+)(in) = K(+)(out). Functionally, A-type voltage-gated potassium channel that mediates transmembrane potassium transport in excitable membranes in the brain. Mediates A-type current I(SA) in suprachiasmatic nucleus (SCN) neurons. Exhibits a low-threshold A-type current with a hyperpolarized steady-state inactivation midpoint and the recovery process was steeply voltage-dependent, with recovery being markedly faster at more negative potentials. May regulates repetitive firing rates in the suprachiasmatic nucleus (SCN) neurons and circadian rhythms in neuronal excitability and behavior. Contributes to the regulation of the circadian rhythm of action potential firing in suprachiasmatic nucleus neurons, which regulates the circadian rhythm of locomotor activity. The regulatory subunit KCNIP1 modulates the kinetics of channel inactivation, increases the current amplitudes and accelerates recovery from inactivation, shifts activation in a depolarizing direction. The regulatory subunit DPP10 decreases the voltage sensitivity of the inactivation channel gating. The protein is A-type voltage-gated potassium channel KCND1 of Bos taurus (Bovine).